The chain runs to 304 residues: Protein UL24 homolog (304 aa).

It belongs to the HHV-1 UL24 protein family.

It localises to the host cytoplasm. The protein localises to the host nucleus. The protein resides in the host Golgi apparatus. In terms of biological role, may play a role in the dispersal of host nucleolin from the nucleolus throughout the nucleus leading to a decrease in ribosome biogenesis. This chain is Protein UL24 homolog (MDV035), found in Gallid herpesvirus 2 (strain Chicken/Md5/ATCC VR-987) (GaHV-2).